The primary structure comprises 722 residues: Polyribonucleotide nucleotidyltransferase (722 aa).

Mg(2+)-binding residues include Asp-505 and Asp-511. The 60-residue stretch at 572–631 folds into the KH domain; sequence PSITTIKIHPDKIRDVIGKGGATIRGICDETGASIDLDDDGNVKIYADNAAAAQAAVNRV. The S1 motif domain maps to 641–709; the sequence is GAIYKGRVER…NRGRVKLSMK (69 aa).

Belongs to the polyribonucleotide nucleotidyltransferase family. In terms of assembly, component of the RNA degradosome, which is a multiprotein complex involved in RNA processing and mRNA degradation. Mg(2+) is required as a cofactor.

It is found in the cytoplasm. The enzyme catalyses RNA(n+1) + phosphate = RNA(n) + a ribonucleoside 5'-diphosphate. Its function is as follows. Involved in mRNA degradation. Catalyzes the phosphorolysis of single-stranded polyribonucleotides processively in the 3'- to 5'-direction. This is Polyribonucleotide nucleotidyltransferase from Marinobacter nauticus (strain ATCC 700491 / DSM 11845 / VT8) (Marinobacter aquaeolei).